Consider the following 407-residue polypeptide: 3-oxoacyl-[acyl-carrier-protein] synthase 1 (407 aa).

The Ketosynthase family 3 (KS3) domain maps to 1 to 406 (MKRVVITGFG…GTNVSLILKK (406 aa)). Catalysis depends on for beta-ketoacyl synthase activity residues Cys164, His300, and His336.

Belongs to the thiolase-like superfamily. Beta-ketoacyl-ACP synthases family. In terms of assembly, homodimer.

It localises to the cytoplasm. The enzyme catalyses a fatty acyl-[ACP] + malonyl-[ACP] + H(+) = a 3-oxoacyl-[ACP] + holo-[ACP] + CO2. It catalyses the reaction (3Z)-decenoyl-[ACP] + malonyl-[ACP] + H(+) = 3-oxo-(5Z)-dodecenoyl-[ACP] + holo-[ACP] + CO2. Its pathway is lipid metabolism; fatty acid biosynthesis. Involved in the type II fatty acid elongation cycle. Catalyzes the elongation of a wide range of acyl-ACP by the addition of two carbons from malonyl-ACP to an acyl acceptor. Can also use unsaturated fatty acids. Catalyzes a key reaction in unsaturated fatty acid (UFA) synthesis, the elongation of the cis-3-decenoyl-ACP produced by FabA. The protein is 3-oxoacyl-[acyl-carrier-protein] synthase 1 (fabB) of Buchnera aphidicola subsp. Schizaphis graminum (strain Sg).